A 319-amino-acid polypeptide reads, in one-letter code: L-threo-3-hydroxyaspartate ammonia-lyase (319 aa).

Lys-53 carries the post-translational modification N6-(pyridoxal phosphate)lysine. Residues Asn-80, 179-183 (GGGGM), and Thr-304 each bind pyridoxal 5'-phosphate.

This sequence belongs to the serine/threonine dehydratase family. May be either a monomer or a homodimer. Pyridoxal 5'-phosphate is required as a cofactor. Mn(2+) serves as cofactor. It depends on Mg(2+) as a cofactor. Requires Ca(2+) as cofactor.

It carries out the reaction (3S)-3-hydroxy-L-aspartate = oxaloacetate + NH4(+). With respect to regulation, is strongly inhibited by hydroxylamine and EDTA in vitro. Functionally, catalyzes the deamination of L-threo-3-hydroxyaspartate to oxaloacetate and ammonia. Shows a high specificity towards L-threo-3-hydroxyaspartate as other 3-hydroxyaminoacids, i.e. D,L-erythro- and D-threo-3-hydroxyaspartate, D-threonine, L-threonine, D,L-allothreonine, D,L-threo-3-phenylserine, D-serine, and L-serine, are not substrates for this enzyme. Exhibits no detectable serine and aspartate racemase activity. Might play a role in the detoxification of naturally occurring 3-hydroxyaspartate in Pseudomonas sp. T62 cells. The chain is L-threo-3-hydroxyaspartate ammonia-lyase from Pseudomonas sp.